Reading from the N-terminus, the 87-residue chain is UPF0367 protein SynRCC307_0258 (87 aa).

The protein belongs to the UPF0367 family.

The protein is UPF0367 protein SynRCC307_0258 of Synechococcus sp. (strain RCC307).